A 613-amino-acid chain; its full sequence is V-type proton ATPase catalytic subunit A isoform 2 (613 aa).

240 to 247 (GAFGCGKT) contributes to the ATP binding site.

The protein belongs to the ATPase alpha/beta chains family. In terms of assembly, V-ATPase is a heteromultimeric enzyme composed of a peripheral catalytic V1 complex (main components: subunits A, B, C, D, E, and F) attached to an integral membrane V0 proton pore complex (main component: the proteolipid protein).

It carries out the reaction ATP + H2O + 4 H(+)(in) = ADP + phosphate + 5 H(+)(out). Catalytic subunit of the peripheral V1 complex of vacuolar ATPase. V-ATPase vacuolar ATPase is responsible for acidifying a variety of intracellular compartments in eukaryotic cells. The protein is V-type proton ATPase catalytic subunit A isoform 2 of Acetabularia acetabulum (Mermaid's wine glass).